A 69-amino-acid polypeptide reads, in one-letter code: Putative defensin-like protein 312 (69 aa).

An N-terminal signal peptide occupies residues 1–19 (MSCFSFLVYFLLFIVTKMS). A disulfide bond links cysteine 45 and cysteine 57.

It belongs to the DEFL family.

The protein resides in the secreted. The polypeptide is Putative defensin-like protein 312 (Arabidopsis thaliana (Mouse-ear cress)).